We begin with the raw amino-acid sequence, 138 residues long: Putative nickel-responsive regulator (138 aa).

The Ni(2+) site is built by H78, H89, H91, and C97.

Belongs to the transcriptional regulatory CopG/NikR family. Ni(2+) serves as cofactor.

In terms of biological role, transcriptional regulator. In Thermococcus kodakarensis (strain ATCC BAA-918 / JCM 12380 / KOD1) (Pyrococcus kodakaraensis (strain KOD1)), this protein is Putative nickel-responsive regulator.